The following is a 103-amino-acid chain: UPF0145 protein HH_1800 (103 aa).

Belongs to the UPF0145 family.

This Helicobacter hepaticus (strain ATCC 51449 / 3B1) protein is UPF0145 protein HH_1800.